A 330-amino-acid chain; its full sequence is CRISPR-associated endonuclease Cas1 (330 aa).

3 residues coordinate Mn(2+): glutamate 154, histidine 222, and glutamate 237.

This sequence belongs to the CRISPR-associated endonuclease Cas1 family. Homodimer, forms a heterotetramer with a Cas2 homodimer. Mg(2+) is required as a cofactor. The cofactor is Mn(2+).

Its function is as follows. CRISPR (clustered regularly interspaced short palindromic repeat), is an adaptive immune system that provides protection against mobile genetic elements (viruses, transposable elements and conjugative plasmids). CRISPR clusters contain spacers, sequences complementary to antecedent mobile elements, and target invading nucleic acids. CRISPR clusters are transcribed and processed into CRISPR RNA (crRNA). Acts as a dsDNA endonuclease. Involved in the integration of spacer DNA into the CRISPR cassette. This is CRISPR-associated endonuclease Cas1 from Clostridium perfringens (strain SM101 / Type A).